The following is a 280-amino-acid chain: MELWLDEALELKNGRALKIKVKEFLHSRTTPFQKIDVFESVGFGRMFTLDGVVMMTEADEFAYHEMIVHVPMMSHPNPEKVLVIGGGDGGTVREVLKHPSVKEVHLCEIDKGVIDVCYEYFPEIANAMKDPRVKHAYEDGAKYVKDYQNYFDCIMVDSSDPVGPAEVLFKRPFYETMANCLKEGGICTTQGESFYYHGSIIRELFNFIPEIFKHCGYYYTVVPTYPSGIIGFTYCSKGPDPYTVVPDPQRVPQGLKYYSAEMHKAAFVLPQFAQKHIVRK.

One can recognise a PABS domain in the interval 2–237 (ELWLDEALEL…GIIGFTYCSK (236 aa)). Position 33 (Q33) interacts with S-methyl-5'-thioadenosine. Residues H64 and D88 each coordinate spermidine. S-methyl-5'-thioadenosine contacts are provided by residues E108 and 139–140 (DG). Catalysis depends on D157, which acts as the Proton acceptor. 157 to 160 (DSSD) is a spermidine binding site. P164 lines the S-methyl-5'-thioadenosine pocket.

Belongs to the spermidine/spermine synthase family. As to quaternary structure, homodimer or homotetramer.

The protein localises to the cytoplasm. It carries out the reaction S-adenosyl 3-(methylsulfanyl)propylamine + putrescine = S-methyl-5'-thioadenosine + spermidine + H(+). The protein operates within amine and polyamine biosynthesis; spermidine biosynthesis; spermidine from putrescine: step 1/1. In terms of biological role, catalyzes the irreversible transfer of a propylamine group from the amino donor S-adenosylmethioninamine (decarboxy-AdoMet) to putrescine (1,4-diaminobutane) to yield spermidine. The chain is Polyamine aminopropyltransferase 2 from Leptospira interrogans serogroup Icterohaemorrhagiae serovar Lai (strain 56601).